The primary structure comprises 335 residues: Leukocyte cell-derived chemotaxin-2 homolog (335 aa).

The first 20 residues, 1-20, serve as a signal peptide directing secretion; the sequence is MHLRTLHFLILIGIFIGGQT. Disulfide bonds link Cys28–Cys66 and Cys39–Cys46. Asp63 provides a ligand contact to Zn(2+). The N-linked (GlcNAc...) asparagine glycan is linked to Asn317.

Belongs to the LECT2/MIM-1 family. As to quaternary structure, component of a multi-protein dma-1 receptor-ligand complex, which is activated upon binding of lect-2, mnr-1 and sax-7 ligands to promote the morphogenesis of dendrites which extend from the PVD neuronal body. Within the complex interacts with sax-7; the interaction is required for lect-2 dendritic localization and enhances the binding of the mnr-1 and sax-7 ligands to the dma-1 receptor-ligand complex. As to expression, expressed in body wall muscle cells, along the boundary of the lateral hypodermis, seam cells, processes of the nervous system including commissures, sensory dendrites in the head, and lateral nerve tracts, and motor neurons and some mechanosensory neurons such as ALM.

The protein resides in the secreted. The protein localises to the cell junction. Its subcellular location is the extracellular space. It is found in the extracellular matrix. It localises to the basement membrane. The protein resides in the cell projection. The protein localises to the dendrite. Its subcellular location is the perikaryon. It is found in the cell surface. Its function is as follows. Muscle-derived dendritic guidance cue, which is required for the formation of somatosensory dendritic arbors which extend from PVD and FLP sensory neurons during development. Ligand of a multi-protein dma-1 receptor-ligand complex, which is activated upon binding of lect-2, mnr-1 and sax-7 ligands to control the growth of dendrites that extend anteriorly from the PVD neuronal cell body. Enhances the binding of the mnr-1 and sax-7 ligands to the dma-1 receptor-ligand complex. Restricts the growth of secondary PVD dendritic branches and any irregularly positioned ectopic tertiary dendritic branches that originate from secondary branches, and promotes the formation of stable higher order dendritic branches. In particular, it is required for the formation of quaternary PVD dendritic branches and promotes their innervation of body wall muscles. Promotes self-avoidance of tertiary dendritic branches of PVD sensory neurons. Not required for the growth of dendrites that extend from AIY and PVQ interneurons, DVB GABergic neurons, PLM and ALM mechanosensory neurons, AFD sensory neurons and DD/VD and DA/DB motor neurons. The polypeptide is Leukocyte cell-derived chemotaxin-2 homolog (Caenorhabditis elegans).